The following is a 245-amino-acid chain: Transmembrane and ubiquitin-like domain-containing protein 1 (245 aa).

The segment at 2 to 30 is required to release iHOPS from membranes; the sequence is ALIEGVGDEVTVLFAVLACLLVLALAWVS. A helical transmembrane segment spans residues 11 to 31; sequence VTVLFAVLACLLVLALAWVST. Positions 33 to 100 are disordered; the sequence is TTESTDPQPQ…ASTPPDSPQE (68 aa). 3 positions are modified to phosphoserine: serine 73, serine 97, and serine 126. Residues 102-175 enclose the Ubiquitin-like domain; it reads LLLRLKFLND…LHCHVSTRVG (74 aa). The next 2 membrane-spanning stretches (helical) occupy residues 194 to 214 and 219 to 239; these read IGSL…YCQI and FFPL…SLLA.

In terms of assembly, interacts with EEF1A1, CAMLG, GRIA2 and GRIP1. Interacts with NPM1 and CDKN2A; TMUB1 can enhance interaction between NPM1 and CDKN2A and is proposed to bridge the proteins; proposed to be mediated by iHOPS. Interacts with TUBG1. Interacts with ERLIN2 and AMFR; TMUB1 promotes the interaction of ERLIN2 with AMFR. Post-translationally, isoform 1 (lHOPS) is processed by regulated intramembrane proteolysis (RIP) in the N-terminus to release iHOPS from membranes. Isoform 2 seems to undergo a selective cleavage in the C-terminal region to release an additional cytoplasmic form. In terms of tissue distribution, expressed in adult brain; at protein level. Isoform 1 (lHOPS) is highly expressed in small intestine, stomach and epididymis. Isoform 2 (sHOPS) and iHOPS are abundantly expressed in brain, liver and adrenal gland.

Its subcellular location is the membrane. The protein resides in the postsynaptic cell membrane. It localises to the recycling endosome. The protein localises to the cytoplasm. It is found in the nucleus. Its subcellular location is the nucleolus. The protein resides in the cytoskeleton. It localises to the microtubule organizing center. The protein localises to the centrosome. In terms of biological role, involved in sterol-regulated ubiquitination and degradation of HMG-CoA reductase HMGCR. Involved in positive regulation of AMPA-selective glutamate receptor GRIA2 recycling to the cell surface. Acts as a negative regulator of hepatocyte growth during regeneration. May contribute to the regulation of translation during cell-cycle progression. May contribute to the regulation of cell proliferation. May be involved in centrosome assembly. Modulates stabilization and nucleolar localization of tumor suppressor CDKN2A and enhances association between CDKN2A and NPM1. This is Transmembrane and ubiquitin-like domain-containing protein 1 (Tmub1) from Mus musculus (Mouse).